The following is a 147-amino-acid chain: Transcription elongation factor Spt5 (147 aa).

The KOW domain occupies 91 to 122 (KGDVVEIIAGPFKGERAKVIRVDKHKEEVTLE).

Belongs to the archaeal Spt5 family. In terms of assembly, heterodimer composed of Spt4 and Spt5. Interacts with RNA polymerase (RNAP). Forms a homodimer in solution.

Stimulates transcription elongation. This chain is Transcription elongation factor Spt5, found in Methanocaldococcus jannaschii (strain ATCC 43067 / DSM 2661 / JAL-1 / JCM 10045 / NBRC 100440) (Methanococcus jannaschii).